A 152-amino-acid chain; its full sequence is 3-hydroxyacyl-[acyl-carrier-protein] dehydratase FabZ (152 aa).

The active site involves His-54.

It belongs to the thioester dehydratase family. FabZ subfamily.

It is found in the cytoplasm. It carries out the reaction a (3R)-hydroxyacyl-[ACP] = a (2E)-enoyl-[ACP] + H2O. Involved in unsaturated fatty acids biosynthesis. Catalyzes the dehydration of short chain beta-hydroxyacyl-ACPs and long chain saturated and unsaturated beta-hydroxyacyl-ACPs. This is 3-hydroxyacyl-[acyl-carrier-protein] dehydratase FabZ from Roseobacter denitrificans (strain ATCC 33942 / OCh 114) (Erythrobacter sp. (strain OCh 114)).